The primary structure comprises 197 residues: MALQQIVEQTVAGLGYDLVEIERSAGGLLRITIDLVWVPPTDEVSAAVGAEQFITVEDCEKVTRQLQFALEVEGVDYTRLEVSSPGIDRLLRNEADFKRFEGEVIDITLKQPMGAAAGGQVHANRKKFRGALERADSGGWQIVWSDEPPVKPGQRISKKRVPAPLQALGFTLDELREARLAPIVDFKGRGTKPGEPG.

Belongs to the RimP family.

Its subcellular location is the cytoplasm. Its function is as follows. Required for maturation of 30S ribosomal subunits. This is Ribosome maturation factor RimP from Acidovorax sp. (strain JS42).